We begin with the raw amino-acid sequence, 338 residues long: Heat-inducible transcription repressor HrcA (338 aa).

The protein belongs to the HrcA family.

Functionally, negative regulator of class I heat shock genes (grpE-dnaK-dnaJ and groELS operons). Prevents heat-shock induction of these operons. In Bacillus cereus (strain ATCC 10987 / NRS 248), this protein is Heat-inducible transcription repressor HrcA.